Reading from the N-terminus, the 210-residue chain is MNSLSTSAFSPVAFSLGLLLVMATAFPTPGPLGGDSKDDATSNRPPLTSADKMEDFIRFILGKISALKKEMCEKYNKCEDSKEALAENNLNLPKLAEEDKCFQSQFNQETCLTRITTGLQEFQIHLKYLEANYEGNKNNAHSVYISTKHLLQKLRPMNRVEVTTPDPTTDSSLQALFKSQDKWLKHVTIHLILRSLEDFLQFSLRAIRIM.

A signal peptide spans 1-25 (MNSLSTSAFSPVAFSLGLLLVMATA). A disulfide bond links cysteine 72 and cysteine 78. Serine 81 carries the phosphoserine modification. A disulfide bridge connects residues cysteine 101 and cysteine 111.

This sequence belongs to the IL-6 superfamily. In terms of assembly, component of a hexamer of two molecules each of IL6, IL6R and IL6ST; first binds to IL6R to associate with the signaling subunit IL6ST. Interacts with IL6R (via the N-terminal ectodomain); this interaction may be affected by IL6R-binding with SORL1, hence decreasing IL6 cis signaling. Interacts with SORL1 (via the N-terminal ectodomain); this interaction leads to IL6 internalization and lysosomal degradation. May form a trimeric complex with the soluble SORL1 ectodomain and soluble IL6R receptor; this interaction might stabilize circulating IL6, hence promoting IL6 trans signaling.

The protein localises to the secreted. Cytokine with a wide variety of biological functions in immunity, tissue regeneration, and metabolism. Binds to IL6R, then the complex associates to the signaling subunit IL6ST/gp130 to trigger the intracellular IL6-signaling pathway. The interaction with the membrane-bound IL6R and IL6ST stimulates 'classic signaling', whereas the binding of IL6 and soluble IL6R to IL6ST stimulates 'trans-signaling'. Alternatively, 'cluster signaling' occurs when membrane-bound IL6:IL6R complexes on transmitter cells activate IL6ST receptors on neighboring receiver cells. Functionally, IL6 is a potent inducer of the acute phase response. Rapid production of IL6 contributes to host defense during infection and tissue injury, but excessive IL6 synthesis is involved in disease pathology. In the innate immune response, is synthesized by myeloid cells, such as macrophages and dendritic cells, upon recognition of pathogens through toll-like receptors (TLRs) at the site of infection or tissue injury. In the adaptive immune response, is required for the differentiation of B cells into immunoglobulin-secreting cells. Plays a major role in the differentiation of CD4(+) T cell subsets. Essential factor for the development of T follicular helper (Tfh) cells that are required for the induction of germinal-center formation. Required to drive naive CD4(+) T cells to the Th17 lineage. Also required for proliferation of myeloma cells and the survival of plasmablast cells. In terms of biological role, acts as an essential factor in bone homeostasis and on vessels directly or indirectly by induction of VEGF, resulting in increased angiogenesis activity and vascular permeability. Induces, through 'trans-signaling' and synergistically with IL1B and TNF, the production of VEGF. Involved in metabolic controls, is discharged into the bloodstream after muscle contraction increasing lipolysis and improving insulin resistance. 'Trans-signaling' in central nervous system also regulates energy and glucose homeostasis. Mediates, through GLP-1, crosstalk between insulin-sensitive tissues, intestinal L cells and pancreatic islets to adapt to changes in insulin demand. Also acts as a myokine. Plays a protective role during liver injury, being required for maintenance of tissue regeneration. Also has a pivotal role in iron metabolism by regulating HAMP/hepcidin expression upon inflammation or bacterial infection. Through activation of IL6ST-YAP-NOTCH pathway, induces inflammation-induced epithelial regeneration. The protein is Interleukin-6 (IL6) of Mustela putorius furo (European domestic ferret).